A 357-amino-acid polypeptide reads, in one-letter code: Palmitoyltransferase ZDHHC20-A (357 aa).

The Cytoplasmic segment spans residues 1-14; the sequence is MAPSHAVRCCQRGL. Residues 15–35 form a helical membrane-spanning segment; the sequence is SWIPVIFINLVVCWSYYAYVV. Residues 36-50 are Lumenal-facing; it reads ELCIYTIPNVNEQVI. The helical transmembrane segment at 51–71 threads the bilayer; the sequence is YLVVFHAFFFMFMWSYWKTIS. Residues 72 to 166 are Cytoplasmic-facing; the sequence is SKPTNPSKEF…NNCVGFSNYK (95 aa). In terms of domain architecture, DHHC spans 123 to 173; the sequence is RYCDRCQLIKPDRCHHCSTCDKCVLKMDHHCPWVNNCVGFSNYKFFVLFLA. C153 serves as the catalytic S-palmitoyl cysteine intermediate. The helical transmembrane segment at 167–187 threads the bilayer; it reads FFVLFLAYSMLYCVYIAATVL. Topologically, residues 188–204 are lumenal; it reads QYFIKFWTNQLPDTHAK. The chain crosses the membrane as a helical span at residues 205 to 228; the sequence is FHVLFLFFVAAMFFISILSLFSYH. Residues 229–357 are Cytoplasmic-facing; it reads LWLVGKNRTT…PVCVTLENES (129 aa).

The protein belongs to the DHHC palmitoyltransferase family.

The protein resides in the golgi apparatus membrane. Its subcellular location is the cell membrane. It is found in the cytoplasm. It localises to the perinuclear region. The protein localises to the endoplasmic reticulum membrane. The protein resides in the endoplasmic reticulum-Golgi intermediate compartment membrane. It catalyses the reaction L-cysteinyl-[protein] + hexadecanoyl-CoA = S-hexadecanoyl-L-cysteinyl-[protein] + CoA. The catalysed reaction is L-cysteinyl-[protein] + tetradecanoyl-CoA = S-tetradecanoyl-L-cysteinyl-[protein] + CoA. The enzyme catalyses L-cysteinyl-[protein] + octadecanoyl-CoA = S-octadecanoyl-L-cysteinyl-[protein] + CoA. Its function is as follows. Palmitoyltransferase that could catalyze the addition of palmitate onto various protein substrates. Catalyzes palmitoylation of Cys residues on protein substrates and has a preference for acyl-CoA with C16 fatty acid chains but may also utilize acyl-CoA with C14 and C18 fatty acid chains. This Danio rerio (Zebrafish) protein is Palmitoyltransferase ZDHHC20-A.